The following is a 142-amino-acid chain: 3-hydroxyacyl-[acyl-carrier-protein] dehydratase FabZ (142 aa).

The active site involves histidine 49.

This sequence belongs to the thioester dehydratase family. FabZ subfamily.

The protein localises to the cytoplasm. It catalyses the reaction a (3R)-hydroxyacyl-[ACP] = a (2E)-enoyl-[ACP] + H2O. Functionally, involved in unsaturated fatty acids biosynthesis. Catalyzes the dehydration of short chain beta-hydroxyacyl-ACPs and long chain saturated and unsaturated beta-hydroxyacyl-ACPs. The protein is 3-hydroxyacyl-[acyl-carrier-protein] dehydratase FabZ of Deinococcus geothermalis (strain DSM 11300 / CIP 105573 / AG-3a).